The chain runs to 440 residues: Xylose isomerase (440 aa).

Residues histidine 100 and aspartate 103 contribute to the active site. Residues glutamate 231, glutamate 267, histidine 270, aspartate 295, aspartate 306, aspartate 308, and aspartate 338 each contribute to the Mg(2+) site.

Belongs to the xylose isomerase family. Homotetramer. Requires Mg(2+) as cofactor.

The protein resides in the cytoplasm. It catalyses the reaction alpha-D-xylose = alpha-D-xylulofuranose. In Burkholderia multivorans (strain ATCC 17616 / 249), this protein is Xylose isomerase.